A 354-amino-acid polypeptide reads, in one-letter code: Small ribosomal subunit biogenesis GTPase RsgA 1 (354 aa).

Positions Met1 to Lys24 are enriched in basic residues. The tract at residues Met1–Glu28 is disordered. Positions Tyr113–Phe274 constitute a CP-type G domain. GTP contacts are provided by residues Asn160 to Asp163 and Gly214 to Ser222. Residues Cys298, Cys303, His305, and Cys311 each coordinate Zn(2+).

It belongs to the TRAFAC class YlqF/YawG GTPase family. RsgA subfamily. In terms of assembly, monomer. Associates with 30S ribosomal subunit, binds 16S rRNA. It depends on Zn(2+) as a cofactor.

The protein resides in the cytoplasm. One of several proteins that assist in the late maturation steps of the functional core of the 30S ribosomal subunit. Helps release RbfA from mature subunits. May play a role in the assembly of ribosomal proteins into the subunit. Circularly permuted GTPase that catalyzes slow GTP hydrolysis, GTPase activity is stimulated by the 30S ribosomal subunit. In Vibrio parahaemolyticus serotype O3:K6 (strain RIMD 2210633), this protein is Small ribosomal subunit biogenesis GTPase RsgA 1.